The following is a 470-amino-acid chain: 6-phospho-beta-galactosidase (470 aa).

Positions 19, 116, 159, 160, and 297 each coordinate D-galactose 6-phosphate. Catalysis depends on E160, which acts as the Proton donor. The active-site Nucleophile is the E375. S430, W431, K437, and Y439 together coordinate D-galactose 6-phosphate.

It belongs to the glycosyl hydrolase 1 family.

It carries out the reaction a 6-phospho-beta-D-galactoside + H2O = D-galactose 6-phosphate + an alcohol. The protein operates within carbohydrate metabolism; lactose degradation; D-galactose 6-phosphate and beta-D-glucose from lactose 6-phosphate: step 1/1. The chain is 6-phospho-beta-galactosidase from Staphylococcus aureus (strain USA300).